The primary structure comprises 549 residues: Glucose-6-phosphate isomerase (549 aa).

Glu355 (proton donor) is an active-site residue. Active-site residues include His386 and Lys514.

Belongs to the GPI family.

Its subcellular location is the cytoplasm. The enzyme catalyses alpha-D-glucose 6-phosphate = beta-D-fructose 6-phosphate. It functions in the pathway carbohydrate biosynthesis; gluconeogenesis. It participates in carbohydrate degradation; glycolysis; D-glyceraldehyde 3-phosphate and glycerone phosphate from D-glucose: step 2/4. Functionally, catalyzes the reversible isomerization of glucose-6-phosphate to fructose-6-phosphate. This Pectobacterium carotovorum subsp. carotovorum (strain PC1) protein is Glucose-6-phosphate isomerase.